The following is a 565-amino-acid chain: Dihydroxy-acid dehydratase (565 aa).

Residue C53 participates in [2Fe-2S] cluster binding. D85 is a Mg(2+) binding site. C126 is a [2Fe-2S] cluster binding site. Mg(2+)-binding residues include D127 and K128. K128 bears the N6-carboxylysine mark. C198 is a binding site for [2Fe-2S] cluster. E450 lines the Mg(2+) pocket. S476 (proton acceptor) is an active-site residue.

The protein belongs to the IlvD/Edd family. In terms of assembly, homodimer. [2Fe-2S] cluster is required as a cofactor. Requires Mg(2+) as cofactor.

The enzyme catalyses (2R)-2,3-dihydroxy-3-methylbutanoate = 3-methyl-2-oxobutanoate + H2O. It catalyses the reaction (2R,3R)-2,3-dihydroxy-3-methylpentanoate = (S)-3-methyl-2-oxopentanoate + H2O. It functions in the pathway amino-acid biosynthesis; L-isoleucine biosynthesis; L-isoleucine from 2-oxobutanoate: step 3/4. It participates in amino-acid biosynthesis; L-valine biosynthesis; L-valine from pyruvate: step 3/4. Functions in the biosynthesis of branched-chain amino acids. Catalyzes the dehydration of (2R,3R)-2,3-dihydroxy-3-methylpentanoate (2,3-dihydroxy-3-methylvalerate) into 2-oxo-3-methylpentanoate (2-oxo-3-methylvalerate) and of (2R)-2,3-dihydroxy-3-methylbutanoate (2,3-dihydroxyisovalerate) into 2-oxo-3-methylbutanoate (2-oxoisovalerate), the penultimate precursor to L-isoleucine and L-valine, respectively. In Synechococcus sp. (strain JA-3-3Ab) (Cyanobacteria bacterium Yellowstone A-Prime), this protein is Dihydroxy-acid dehydratase.